The sequence spans 278 residues: Transmembrane protein 41B (278 aa).

Positions 1–31 (MQVHERSHTGGHTCQCNHGSEKKAPATGKVH) are disordered. 6 helical membrane passes run 39 to 59 (MSLL…FLVY), 96 to 116 (FYVE…TFAI), 132 to 154 (FPLA…YLLS), 184 to 204 (LINY…FINI), 212 to 232 (PLKV…FVAI), and 249 to 269 (SWNS…PAIF). The segment at 127-238 (GFLYPFPLAL…FVAIKAGTTL (112 aa)) is VTT domain; required for its function in autophagy.

Belongs to the TMEM41 family.

Its subcellular location is the endoplasmic reticulum membrane. It localises to the endomembrane system. The catalysed reaction is a 1,2-diacyl-sn-glycero-3-phospho-L-serine(in) = a 1,2-diacyl-sn-glycero-3-phospho-L-serine(out). It catalyses the reaction cholesterol(in) = cholesterol(out). The enzyme catalyses a 1,2-diacyl-sn-glycero-3-phosphocholine(in) = a 1,2-diacyl-sn-glycero-3-phosphocholine(out). It carries out the reaction a 1,2-diacyl-sn-glycero-3-phosphoethanolamine(in) = a 1,2-diacyl-sn-glycero-3-phosphoethanolamine(out). Its function is as follows. Phospholipid scramblase involved in lipid homeostasis and membrane dynamics processes. Has phospholipid scramblase activity toward cholesterol and phosphatidylserine, as well as phosphatidylethanolamine and phosphatidylcholine. Required for autophagosome formation: participates in early stages of autophagosome biogenesis at the endoplasmic reticulum (ER) membrane by reequilibrating the leaflets of the ER as lipids are extracted by atg2 (atg2a or atg2b) to mediate autophagosome assembly. In addition to autophagy, involved in other processes in which phospholipid scramblase activity is required. Required for normal motor neuron development. The protein is Transmembrane protein 41B of Xenopus tropicalis (Western clawed frog).